A 372-amino-acid chain; its full sequence is DNA damage-repair/toleration protein DRT100 (372 aa).

Residues 1 to 26 (MRKLLASPFSSLLAVVFISVISVVRC) form the signal peptide. LRR repeat units lie at residues 136–158 (SLRILDLAGNKITGEIPAEIGKL), 160–183 (KLAVLNLAENQMSGEIPASLTSLI), 184–205 (ELKHLELTENGITGVIPADFGS), 208–230 (MLSRVLLGRNELTGSIPESISGM), 232–254 (RLADLDLSKNHIEGPIPEWMGNM), 256–277 (VLSLLNLDCNSLTGPIPGSLLS), 280–302 (GLDVANLSRNALEGTIPDVFGSK), 304–326 (YLVSLDLSHNSLSGRIPDSLSSA), and 328–350 (FVGHLDISHNKLCGRIPTGFPFD).

In terms of biological role, this protein is able to complement bacterial recA mutations, but its native function in the plant is not known. The polypeptide is DNA damage-repair/toleration protein DRT100 (DRT100) (Arabidopsis thaliana (Mouse-ear cress)).